The sequence spans 369 residues: Protein-glutamate methylesterase/protein-glutamine glutaminase of group 3 operon (369 aa).

Residues 11–128 (RVLIVDDSAA…DLERQEASIR (118 aa)) enclose the Response regulatory domain. At Asp-62 the chain carries 4-aspartylphosphate. The tract at residues 136-168 (ATETTRRRSQPEPRPLAPGPKLTADEILPARPP) is disordered. A CheB-type methylesterase domain is found at 170-358 (PVPETMPVVC…LDRLAARIME (189 aa)). Residues Ser-183, His-209, and Asp-305 contribute to the active site.

The protein belongs to the CheB family. In terms of processing, phosphorylated in vitro by CheA2, but not by CheA1. Phosphorylation of the N-terminal regulatory domain activates the methylesterase activity.

It is found in the cytoplasm. The enzyme catalyses [protein]-L-glutamate 5-O-methyl ester + H2O = L-glutamyl-[protein] + methanol + H(+). It carries out the reaction L-glutaminyl-[protein] + H2O = L-glutamyl-[protein] + NH4(+). Involved in chemotaxis. Part of a chemotaxis signal transduction system that modulates chemotaxis in response to various stimuli. Catalyzes the demethylation of specific methylglutamate residues introduced into the chemoreceptors (methyl-accepting chemotaxis proteins or MCP) by CheR. Also mediates the irreversible deamidation of specific glutamine residues to glutamic acid. The polypeptide is Protein-glutamate methylesterase/protein-glutamine glutaminase of group 3 operon (cheB3) (Cereibacter sphaeroides (Rhodobacter sphaeroides)).